The chain runs to 257 residues: Snake venom serine protease nikobin (257 aa).

A signal peptide spans 1–18 (MVLIRVLANLLLLQLSYA). A propeptide spanning residues 19–24 (QKSSEL) is cleaved from the precursor. The 224-residue stretch at 25–248 (VIGGDECNIN…YSDWIQSIIA (224 aa)) folds into the Peptidase S1 domain. 6 cysteine pairs are disulfide-bonded: Cys31–Cys162, Cys49–Cys65, Cys97–Cys255, Cys141–Cys209, Cys173–Cys188, and Cys199–Cys224. Catalysis depends on charge relay system residues His64 and Asp109. 2 N-linked (GlcNAc...) asparagine glycosylation sites follow: Asn120 and Asn121. Residue Ser203 is the Charge relay system of the active site. A glycan (N-linked (GlcNAc...) asparagine) is linked at Asn250.

Belongs to the peptidase S1 family. Snake venom subfamily. As to quaternary structure, monomer. In terms of tissue distribution, expressed by the venom gland.

The protein localises to the secreted. Functionally, snake venom serine protease that may act in the hemostasis system of the prey. The protein is Snake venom serine protease nikobin (sp-VN) of Vipera nikolskii (Nikolsky's adder).